A 490-amino-acid polypeptide reads, in one-letter code: Betaine aldehyde dehydrogenase (490 aa).

Thr26, Ile27, and Asp93 together coordinate K(+). NAD(+) is bound at residue 150–152 (GAW). Residue Lys162 is the Charge relay system of the active site. 176-179 (KPSE) serves as a coordination point for NAD(+). K(+) is bound at residue Val180. 230 to 233 (GVAS) provides a ligand contact to NAD(+). Leu246 is a K(+) binding site. Glu252 (proton acceptor) is an active-site residue. NAD(+) contacts are provided by Gly254, Cys286, and Glu387. Cys286 serves as the catalytic Nucleophile. Residue Cys286 is modified to Cysteine sulfenic acid (-SOH). The K(+) site is built by Lys457 and Gly460. Glu464 functions as the Charge relay system in the catalytic mechanism.

This sequence belongs to the aldehyde dehydrogenase family. As to quaternary structure, dimer of dimers. K(+) serves as cofactor.

The catalysed reaction is betaine aldehyde + NAD(+) + H2O = glycine betaine + NADH + 2 H(+). The protein operates within amine and polyamine biosynthesis; betaine biosynthesis via choline pathway; betaine from betaine aldehyde: step 1/1. In terms of biological role, involved in the biosynthesis of the osmoprotectant glycine betaine. Catalyzes the irreversible oxidation of betaine aldehyde to the corresponding acid. The polypeptide is Betaine aldehyde dehydrogenase (Escherichia coli (strain SMS-3-5 / SECEC)).